Consider the following 430-residue polypeptide: Replication factor C large subunit (430 aa).

Gly75–Thr82 serves as a coordination point for ATP.

It belongs to the activator 1 small subunits family. RfcL subfamily. Heteromultimer composed of small subunits (RfcS) and large subunits (RfcL).

In terms of biological role, part of the RFC clamp loader complex which loads the PCNA sliding clamp onto DNA. This is Replication factor C large subunit from Nanoarchaeum equitans (strain Kin4-M).